Consider the following 299-residue polypeptide: DNA-binding transcriptional repressor CapW (299 aa).

Residues 1-84 (MESSGSSKVR…EFKPITKRSE (84 aa)) are winged HTH domain. The interval 85-196 (ATRYLNELQR…IGRLDVLEHV (112 aa)) is WYL domain. Residues 120 to 200 (SRAIEADEVA…DVLEHVFSAK (81 aa)) form the WYL domain. The interval 145 to 189 (YQSMDAPEPQEWVLSPHALGFDGLRWHARAWCHARQVFRDFAIGR) is probable ligand-binding region. The WCX domain stretch occupies residues 197–299 (FSAKPVDPLL…DRDGLQHLRR (103 aa)).

As to quaternary structure, homodimer.

In terms of biological role, transcriptional regulator of a CBASS antivirus system. CBASS (cyclic oligonucleotide-based antiphage signaling system) provides immunity against bacteriophage. The CD-NTase protein synthesizes cyclic nucleotides in response to infection; these serve as specific second messenger signals. The signals activate a diverse range of effectors, leading to bacterial cell death and thus abortive phage infection. A type III CBASS system, part of a CapW-Cap6-Cap8-Cap7-CdnC-NucC locus. Binds specifically to palindromes that overlap the -10 site in the promoter of cap6, found beween found between the genes for divergently transcribed capW and cap6 (cognate DNA). Probably represses transcription bidirectionally from the promoter. Mutations that make it a constitutive repressor in E.coli do not change DNA-binding affinity. This Stenotrophomonas maltophilia (Pseudomonas maltophilia) protein is DNA-binding transcriptional repressor CapW.